The following is a 942-amino-acid chain: Protein inturned (942 aa).

The interval 1–52 (MASVASCDSRPSSDELPGDPSSQEEDEDYDFEDRVSDSGSYSSASSDYDDLE) is disordered. Positions 22–31 (SQEEDEDYDF) are enriched in acidic residues. Residues 37–46 (DSGSYSSASS) are compositionally biased toward low complexity. The region spanning 185–263 (LVGIIHQTKW…PMQVKLTFEN (79 aa)) is the PDZ domain. 2 positions are modified to phosphoserine: Ser-670 and Ser-674. Positions 704–754 (TRKPSPSCSSGGSDNGCEGGEDDGFSPHTTPDAVRKQRESQGSDGLEESGT) are disordered.

Belongs to the inturned family. Component of the CPLANE (ciliogenesis and planar polarity effectors) complex, composed of INTU, FUZ and WDPCP. Interacts with CPLANE1. Interacts with NPHP4 and DAAM1; INTU is mediating the interaction between NPHP4 and DAAM1.

The protein resides in the cytoplasm. It is found in the cell surface. It localises to the cytoskeleton. The protein localises to the cilium basal body. Its subcellular location is the microtubule organizing center. The protein resides in the centrosome. It is found in the centriole. Its function is as follows. Plays a key role in ciliogenesis and embryonic development. Regulator of cilia formation by controlling the organization of the apical actin cytoskeleton and the positioning of the basal bodies at the apical cell surface, which in turn is essential for the normal orientation of elongating ciliary microtubules. Plays a key role in definition of cell polarity via its role in ciliogenesis but not via conversion extension. Has an indirect effect on hedgehog signaling. Proposed to function as core component of the CPLANE (ciliogenesis and planar polarity effectors) complex involved in the recruitment of peripheral IFT-A proteins to basal bodies. Required for recruitment of CPLANE2 to the mother centriole. Binds phosphatidylinositol 3-phosphate with highest affinity, followed by phosphatidylinositol 4-phosphate and phosphatidylinositol 5-phosphate. The polypeptide is Protein inturned (INTU) (Homo sapiens (Human)).